The sequence spans 224 residues: MDKKLSIAIDGPAAAGKSTVAKIVAEKKSYVYIDTGAMYRAITYTALKQNADLTDEAALTELLKRTEIELVSVPEGQIVLVNGEDVTEEIRKDEVSNQVSIAAKHKGVREEMVKRQQQLGQKGGVVMDGRDIGTHVLPDAEVKIFLLASVEERAKRRYEENKKKGYDVNYETLIEEIARRDKLDSEREVSPLRKAEDAIEIDTTSLSIAEVAGKILEIVEQKSR.

11–19 contributes to the ATP binding site; that stretch reads GPAAAGKST.

This sequence belongs to the cytidylate kinase family. Type 1 subfamily.

Its subcellular location is the cytoplasm. It catalyses the reaction CMP + ATP = CDP + ADP. The catalysed reaction is dCMP + ATP = dCDP + ADP. In Bacillus velezensis (strain DSM 23117 / BGSC 10A6 / LMG 26770 / FZB42) (Bacillus amyloliquefaciens subsp. plantarum), this protein is Cytidylate kinase.